Here is a 109-residue protein sequence, read N- to C-terminus: Peptide chaperone MftB (109 aa).

It belongs to the peptide chaperone MftB family.

In terms of biological role, peptide chaperone involved in the biosynthesis of the enzyme cofactor mycofactocin (MFT). Binds MftA and MftC with high affinity, and is essential for MftC activity on MftA, likely via the formation of a ternary complex. In Mycobacterium tuberculosis (strain ATCC 25618 / H37Rv), this protein is Peptide chaperone MftB.